The sequence spans 1191 residues: Major DNA-binding protein (1191 aa).

The short motif at 820-821 (FW) is the Required for filament formation element. 2 disordered regions span residues 1122–1146 (TAAG…AADE) and 1168–1191 (AGLI…RSRL). Residues 1127 to 1142 (AAGGGGSATEGGGGGA) show a composition bias toward gly residues. Positions 1173-1191 (GDDVRGDDEFELPSKRSRL) are required for nuclear localization.

It belongs to the herpesviridae major DNA-binding protein family. As to quaternary structure, homooligomers. Forms double-helical filaments necessary for the formation of replication compartments within the host nucleus. Interacts with the origin-binding protein. Interacts with the helicase primase complex; this interaction stimulates primer synthesis activity of the helicase-primase complex. Interacts with the DNA polymerase. Interacts with the alkaline exonuclease; this interaction increases its nuclease processivity.

The protein resides in the host nucleus. Its function is as follows. Single-stranded DNA-binding protein required for DNA replication. Plays several crucial roles in viral infection. Participates in the opening of the viral DNA origin to initiate replication by interacting with the origin-binding protein. May disrupt loops, hairpins and other secondary structures present on ssDNA to reduce and eliminate pausing of viral DNA polymerase at specific sites during elongation. Promotes viral DNA recombination by performing strand-transfer, characterized by the ability to transfer a DNA strand from a linear duplex to a complementary single-stranded DNA circle. Can also catalyze the renaturation of complementary single strands. Additionally, reorganizes the host cell nucleus, leading to the formation of prereplicative sites and replication compartments. This process is driven by the protein which can form double-helical filaments in the absence of DNA. This is Major DNA-binding protein from Mus musculus (Mouse).